We begin with the raw amino-acid sequence, 280 residues long: uncharacterized protein (280 aa).

It belongs to the metallo-dependent hydrolases superfamily.

This is an uncharacterized protein from Methanocaldococcus jannaschii (strain ATCC 43067 / DSM 2661 / JAL-1 / JCM 10045 / NBRC 100440) (Methanococcus jannaschii).